We begin with the raw amino-acid sequence, 340 residues long: Phosphate acyltransferase (340 aa).

It belongs to the PlsX family. In terms of assembly, homodimer. Probably interacts with PlsY.

It localises to the cytoplasm. It carries out the reaction a fatty acyl-[ACP] + phosphate = an acyl phosphate + holo-[ACP]. The protein operates within lipid metabolism; phospholipid metabolism. Its function is as follows. Catalyzes the reversible formation of acyl-phosphate (acyl-PO(4)) from acyl-[acyl-carrier-protein] (acyl-ACP). This enzyme utilizes acyl-ACP as fatty acyl donor, but not acyl-CoA. This Leptospira biflexa serovar Patoc (strain Patoc 1 / ATCC 23582 / Paris) protein is Phosphate acyltransferase.